The chain runs to 571 residues: Proline--tRNA ligase (571 aa).

Belongs to the class-II aminoacyl-tRNA synthetase family. ProS type 1 subfamily. Homodimer.

It is found in the cytoplasm. It catalyses the reaction tRNA(Pro) + L-proline + ATP = L-prolyl-tRNA(Pro) + AMP + diphosphate. In terms of biological role, catalyzes the attachment of proline to tRNA(Pro) in a two-step reaction: proline is first activated by ATP to form Pro-AMP and then transferred to the acceptor end of tRNA(Pro). As ProRS can inadvertently accommodate and process non-cognate amino acids such as alanine and cysteine, to avoid such errors it has two additional distinct editing activities against alanine. One activity is designated as 'pretransfer' editing and involves the tRNA(Pro)-independent hydrolysis of activated Ala-AMP. The other activity is designated 'posttransfer' editing and involves deacylation of mischarged Ala-tRNA(Pro). The misacylated Cys-tRNA(Pro) is not edited by ProRS. This Histophilus somni (strain 2336) (Haemophilus somnus) protein is Proline--tRNA ligase.